We begin with the raw amino-acid sequence, 121 residues long: Large ribosomal subunit protein uL14 (121 aa).

It belongs to the universal ribosomal protein uL14 family. As to quaternary structure, part of the 50S ribosomal subunit. Forms a cluster with proteins L3 and L19. In the 70S ribosome, L14 and L19 interact and together make contacts with the 16S rRNA in bridges B5 and B8.

Its function is as follows. Binds to 23S rRNA. Forms part of two intersubunit bridges in the 70S ribosome. The sequence is that of Large ribosomal subunit protein uL14 from Bacteroides fragilis (strain ATCC 25285 / DSM 2151 / CCUG 4856 / JCM 11019 / LMG 10263 / NCTC 9343 / Onslow / VPI 2553 / EN-2).